We begin with the raw amino-acid sequence, 783 residues long: Endonuclease MutS2 (783 aa).

333-340 (GPNTGGKT) contacts ATP. The region spanning 708 to 783 (IDLRGKNIEE…GLGATFIYLK (76 aa)) is the Smr domain.

Belongs to the DNA mismatch repair MutS family. MutS2 subfamily. Homodimer. Binds to stalled ribosomes, contacting rRNA.

Functionally, endonuclease that is involved in the suppression of homologous recombination and thus may have a key role in the control of bacterial genetic diversity. Acts as a ribosome collision sensor, splitting the ribosome into its 2 subunits. Detects stalled/collided 70S ribosomes which it binds and splits by an ATP-hydrolysis driven conformational change. Acts upstream of the ribosome quality control system (RQC), a ribosome-associated complex that mediates the extraction of incompletely synthesized nascent chains from stalled ribosomes and their subsequent degradation. Probably generates substrates for RQC. This chain is Endonuclease MutS2, found in Finegoldia magna (strain ATCC 29328 / DSM 20472 / WAL 2508) (Peptostreptococcus magnus).